The following is a 986-amino-acid chain: Vacuolar membrane protease (986 aa).

The Cytoplasmic segment spans residues 1–16 (MAPLRLSRANPLAFAR). Residues 17–37 (WPVTLITAVVYLAFLIPLLIV) form a helical membrane-spanning segment. Residues 38-392 (HHVVPSPPTA…TTFVLFELHT (355 aa)) are Vacuolar-facing. Asn-121 carries N-linked (GlcNAc...) asparagine glycosylation. Residues His-176 and Asp-188 each contribute to the Zn(2+) site. The active-site Proton acceptor is the Glu-222. Zn(2+) contacts are provided by Glu-223, Glu-248, and His-321. The chain crosses the membrane as a helical span at residues 393-413 (LFALSVTLLVVAPLALLVTGI). Topologically, residues 414-444 (ALTRADKMYLFRTSAKADESLDSVPLQGLRG) are cytoplasmic. Residues 445–465 (FFRFPFLFAIPTAVTVGLAYL) form a helical membrane-spanning segment. Residues 466–475 (VTKVNPLIIH) lie on the Vacuolar side of the membrane. Residues 476-496 (SSEYAVWSMMLSAWTFLAWFV) form a helical membrane-spanning segment. At 497-510 (SRMADFARPTALHR) the chain is on the cytoplasmic side. A helical membrane pass occupies residues 511–531 (IYTLTWMFVLAWVLLVISTVY). Residues 532–535 (QNQR) are Vacuolar-facing. A helical membrane pass occupies residues 536–556 (GLAGSYSVFFFFSGTFLATWI). Residues 557-668 (SYLELFSLPR…SASLPTWTWT (112 aa)) are Cytoplasmic-facing. The span at 573–585 (QNRPTSRRASSYG) shows a compositional bias: polar residues. The tract at residues 573 to 622 (QNRPTSRRASSYGGSRLGTASGEDHEEDDHDAEEEEEEQEPTESTSLLGG) is disordered. Positions 596-613 (DHEEDDHDAEEEEEEQEP) are enriched in acidic residues. Residues 669–689 (LQFLLMAPLVLIMVGPLALLL) traverse the membrane as a helical segment. The Vacuolar portion of the chain corresponds to 690–704 (TSALHQTGQDGSSSL). The helical transmembrane segment at 705–725 (FIYVAIAALTTFLLTPLLPFI) threads the bilayer. Residues 726-732 (HRHTYHL) are Cytoplasmic-facing. A helical membrane pass occupies residues 733-753 (PVFLLLVFLGTLIYNLVAFPF). Topologically, residues 754 to 986 (SPTNRLKLFF…LVEGWKGFSI (233 aa)) are vacuolar. Residues Asn-799, Asn-840, and Asn-948 are each glycosylated (N-linked (GlcNAc...) asparagine). The segment at 840-859 (NTTDDKEGDEDTHHPRKARI) is disordered.

This sequence belongs to the peptidase M28 family. Zn(2+) is required as a cofactor.

Its subcellular location is the vacuole membrane. Functionally, may be involved in vacuolar sorting and osmoregulation. This Aspergillus niger (strain ATCC MYA-4892 / CBS 513.88 / FGSC A1513) protein is Vacuolar membrane protease.